The sequence spans 314 residues: FHA domain-containing protein DDL (314 aa).

Residues 1–10 are compositionally biased toward low complexity; the sequence is MAPSSRSPSP. The segment at 1–146 is disordered; the sequence is MAPSSRSPSP…NVEEDSVARM (146 aa). Residues 18 to 127 are compositionally biased toward basic and acidic residues; it reads ARGEKEIGRS…AIASRHDEGS (110 aa). Residue Ser133 is modified to Phosphoserine. The FHA domain occupies 219–282; sequence YLFGRERRIA…NKTYINESPI (64 aa).

Interacts with DCL1 (via N-terminus). In terms of tissue distribution, expressed in roots, lateral roots, vascular strands of roots and leaves, vegetative meristems, pollen and developing seeds.

The protein resides in the nucleus. Its function is as follows. Involved in the microRNA (miRNA) and short interfering RNA (siRNA) biogenesis. May facilitate DCL1 to access or recognize primary miRNAs. Binds RNA non-specifically. This Arabidopsis thaliana (Mouse-ear cress) protein is FHA domain-containing protein DDL (DDL).